A 510-amino-acid polypeptide reads, in one-letter code: UDP-N-acetylmuramoyl-tripeptide--D-alanyl-D-alanine ligase (510 aa).

136 to 142 (GSSGKTS) is an ATP binding site.

This sequence belongs to the MurCDEF family. MurF subfamily.

The protein resides in the cytoplasm. The enzyme catalyses D-alanyl-D-alanine + UDP-N-acetyl-alpha-D-muramoyl-L-alanyl-gamma-D-glutamyl-meso-2,6-diaminopimelate + ATP = UDP-N-acetyl-alpha-D-muramoyl-L-alanyl-gamma-D-glutamyl-meso-2,6-diaminopimeloyl-D-alanyl-D-alanine + ADP + phosphate + H(+). Its pathway is cell wall biogenesis; peptidoglycan biosynthesis. In terms of biological role, involved in cell wall formation. Catalyzes the final step in the synthesis of UDP-N-acetylmuramoyl-pentapeptide, the precursor of murein. The sequence is that of UDP-N-acetylmuramoyl-tripeptide--D-alanyl-D-alanine ligase from Mycobacterium bovis (strain ATCC BAA-935 / AF2122/97).